A 188-amino-acid polypeptide reads, in one-letter code: Potassium-transporting ATPase KdpC subunit (188 aa).

Residues 13-33 (MTAIFWIGCGLAYPLIFTGFA) traverse the membrane as a helical segment.

The protein belongs to the KdpC family. In terms of assembly, the system is composed of three essential subunits: KdpA, KdpB and KdpC.

Its subcellular location is the cell inner membrane. In terms of biological role, part of the high-affinity ATP-driven potassium transport (or Kdp) system, which catalyzes the hydrolysis of ATP coupled with the electrogenic transport of potassium into the cytoplasm. This subunit acts as a catalytic chaperone that increases the ATP-binding affinity of the ATP-hydrolyzing subunit KdpB by the formation of a transient KdpB/KdpC/ATP ternary complex. This Gloeobacter violaceus (strain ATCC 29082 / PCC 7421) protein is Potassium-transporting ATPase KdpC subunit.